The chain runs to 322 residues: Biotin synthase (322 aa).

Positions 39–266 (NQIQVSSLLN…KSVVRLSAGR (228 aa)) constitute a Radical SAM core domain. 3 residues coordinate [4Fe-4S] cluster: cysteine 54, cysteine 58, and cysteine 61. Cysteine 98, cysteine 129, cysteine 189, and arginine 261 together coordinate [2Fe-2S] cluster.

Belongs to the radical SAM superfamily. Biotin synthase family. As to quaternary structure, homodimer. [4Fe-4S] cluster serves as cofactor. It depends on [2Fe-2S] cluster as a cofactor.

The enzyme catalyses (4R,5S)-dethiobiotin + (sulfur carrier)-SH + 2 reduced [2Fe-2S]-[ferredoxin] + 2 S-adenosyl-L-methionine = (sulfur carrier)-H + biotin + 2 5'-deoxyadenosine + 2 L-methionine + 2 oxidized [2Fe-2S]-[ferredoxin]. It participates in cofactor biosynthesis; biotin biosynthesis; biotin from 7,8-diaminononanoate: step 2/2. Functionally, catalyzes the conversion of dethiobiotin (DTB) to biotin by the insertion of a sulfur atom into dethiobiotin via a radical-based mechanism. The sequence is that of Biotin synthase from Ruthia magnifica subsp. Calyptogena magnifica.